The chain runs to 183 residues: MTATAQQLEYLKNSIKSIQDYPKPGILFRDVTSLLEDPKAYALSIELLVERYKNAGITKVVGTEARGFLFGAPVALALGVGFVPVRKPRKLPRETIAESYELEYGTDQLEIHVDAIKPGDKVLVVDDLLATGGTIEATVKLIRRLGGEVTDAAFIINLFDIGGEERLNKQGITCYSLVPFPGH.

This sequence belongs to the purine/pyrimidine phosphoribosyltransferase family. In terms of assembly, homodimer.

It localises to the cytoplasm. The catalysed reaction is AMP + diphosphate = 5-phospho-alpha-D-ribose 1-diphosphate + adenine. The protein operates within purine metabolism; AMP biosynthesis via salvage pathway; AMP from adenine: step 1/1. Catalyzes a salvage reaction resulting in the formation of AMP, that is energically less costly than de novo synthesis. The polypeptide is Adenine phosphoribosyltransferase (Cronobacter sakazakii (strain ATCC BAA-894) (Enterobacter sakazakii)).